The sequence spans 508 residues: Octopamine receptor beta-1R (508 aa).

Topologically, residues 1 to 111 are extracellular; it reads MTLLQRLQAM…SHLALVFVKC (111 aa). The chain crosses the membrane as a helical span at residues 112–132; that stretch reads FIIGFIILAAILGNMLVIVSV. Residues 133–139 are Cytoplasmic-facing; the sequence is MRHRKLR. The chain crosses the membrane as a helical span at residues 140–160; sequence IITNYFVVSLAVADMLVALCA. At 161–186 the chain is on the extracellular side; that stretch reads MTFNASVMISGKWMFGSVMCDMWNSF. N164 is a glycosylation site (N-linked (GlcNAc...) asparagine). Residues 187 to 209 form a helical membrane-spanning segment; it reads DVYFSTASIMHLCCISVDRYYAI. Topologically, residues 210–223 are cytoplasmic; the sequence is VQPLDYPLIMTQRR. Residues 224 to 244 traverse the membrane as a helical segment; that stretch reads VFIMLLMVWLSPALLSFLPIC. Over 245-270 the chain is Extracellular; it reads SGWYTTTENYKYLKSNPHICEFKVNK. Residues 271 to 291 form a helical membrane-spanning segment; sequence AYAIVSSSMSFWIPGIVMLSM. Residues 292-351 lie on the Cytoplasmic side of the membrane; sequence YYRIYQEADRQERLVYRSKVAALLLEKHLQISQIPKPRPSIQVEQSTISTMRRERKAART. Residues 352–372 form a helical membrane-spanning segment; that stretch reads LGIIMSAFLICWLPFFLWYIV. The Extracellular segment spans residues 373-383; it reads SSLCDSCITPR. The chain crosses the membrane as a helical span at residues 384–404; that stretch reads LLVGILFWIGYFNSALNPIIY. The Cytoplasmic portion of the chain corresponds to 405 to 508; sequence AYFNRDFRAA…MQQLHPLYTN (104 aa). The segment at 440–464 is disordered; sequence RDLEFGGPSRRGTNGAQRTGSGSAE. Polar residues predominate over residues 450 to 461; it reads RGTNGAQRTGSG.

It belongs to the G-protein coupled receptor 1 family. In terms of tissue distribution, in the adult, expressed in the superior protocerebrum and the optic lobe medulla of the central nervous system, nurse cells of egg chambers in the ovary at oogenic stages 1-10, and spermatogonia and spermatocytes in the testis. Expressed in embryonic and larval ventral nerve cord and brain lobe, and the larval imaginal disk and larval salivary gland. Also expressed in larval synaptic boutons and retinal cells in the optic disk.

It localises to the cell membrane. Its function is as follows. Autoreceptor for octopamine, which is a neurotransmitter, neurohormone, and neuromodulator in invertebrates. Negatively regulates synaptic growth by activating the inhibitory G protein Galphao and limiting cAMP production. Antagonizes the action of Octbeta2R which stimulates synaptic growth. In Drosophila melanogaster (Fruit fly), this protein is Octopamine receptor beta-1R.